The primary structure comprises 354 residues: Selection and upkeep of intraepithelial T-cells protein 1 (354 aa).

An Ig-like V-type 1 domain is found at 23–141 (PSSEQFTVNS…EEAIAEVKVT (119 aa)). Intrachain disulfides connect Cys-49–Cys-123 and Cys-163–Cys-217. The Ig-like C1-type 2 domain maps to 161 to 233 (VECNSEGWFP…TGQEERTSIV (73 aa)). Helical transmembrane passes span 243-263 (SVWI…IMMP), 283-303 (LIGI…TITL), and 326-346 (MTVM…LVYF).

This sequence belongs to the SKINT family. In terms of tissue distribution, expressed in the thymus and skin.

It localises to the membrane. In terms of biological role, may act by engaging a cell surface molecule on immature T-cells in the embryonic thymus. The protein is Selection and upkeep of intraepithelial T-cells protein 1 (SKINT1) of Macaca fascicularis (Crab-eating macaque).